We begin with the raw amino-acid sequence, 145 residues long: MKLLVVNGPNLNMLGKRDRNVYGNFTYDDLVRMIEDWAKRNGVEVEVFQSNHEGEIIDRLHRLDFDGLVINPGAFTHYSYAIRDALEIVKVPKVEVHISNIHGREEFRRKSVTAEVCDGQISGLGAYGYILALEYVRKVSSESSK.

Tyrosine 22 acts as the Proton acceptor in catalysis. Residues asparagine 71, histidine 77, and aspartate 84 each coordinate substrate. The active-site Proton donor is histidine 97. Substrate contacts are provided by residues 98–99 (IS) and arginine 108.

Belongs to the type-II 3-dehydroquinase family. In terms of assembly, homododecamer.

The catalysed reaction is 3-dehydroquinate = 3-dehydroshikimate + H2O. Its pathway is metabolic intermediate biosynthesis; chorismate biosynthesis; chorismate from D-erythrose 4-phosphate and phosphoenolpyruvate: step 3/7. Its function is as follows. Catalyzes a trans-dehydration via an enolate intermediate. This is 3-dehydroquinate dehydratase from Thermotoga neapolitana (strain ATCC 49049 / DSM 4359 / NBRC 107923 / NS-E).